The following is a 108-amino-acid chain: Large ribosomal subunit protein bL21 (108 aa).

The protein belongs to the bacterial ribosomal protein bL21 family. As to quaternary structure, part of the 50S ribosomal subunit. Contacts protein L20.

In terms of biological role, this protein binds to 23S rRNA in the presence of protein L20. This is Large ribosomal subunit protein bL21 from Buchnera aphidicola subsp. Acyrthosiphon pisum (strain 5A).